Consider the following 339-residue polypeptide: MATKPVVKEKKKLENKKEIYKLIEHNDSSNKNVILEKEEELICPMCGSKNIIKDYERAEIVCETCGCVLQQNLFDVGPEWRAFDHEQRVKRSRVGPPMTYTIHDKGLSTVIDWRNKDSYGKDISADKRAQLYRLRKWQRRIRVSDASERNLAFALSELDRIASKLGLPRNVRENAAVLYRGAVEKGLIRGRSIEGVAAAALYAACRRCKVPRTLDEIAEGSRVDRKEIGRTYRFISRELNIRLTPTNPIDYVPRFASELKLPGEVESKAISILQKANEKGLTSGRGPTGVAAAAIYIASVLHGTRRTQREVADVAGVTEVTIRNRYKELTEHLDIDVTL.

The TFIIB-type zinc-finger motif lies at 39–70 (EELICPMCGSKNIIKDYERAEIVCETCGCVLQ). 4 residues coordinate Zn(2+): cysteine 43, cysteine 46, cysteine 62, and cysteine 65. A run of 2 repeats spans residues 156 to 239 (SELD…SREL) and 250 to 331 (DYVP…ELTE).

This sequence belongs to the TFIIB family.

Functionally, stabilizes TBP binding to an archaeal box-A promoter. Also responsible for recruiting RNA polymerase II to the pre-initiation complex (DNA-TBP-TFIIB). This is Transcription initiation factor IIB from Methanothermococcus thermolithotrophicus (Methanococcus thermolithotrophicus).